The primary structure comprises 245 residues: Tetraspanin-6 (245 aa).

The Cytoplasmic segment spans residues 1-19; the sequence is MASPSRRLQTKPVITCFKS. Residues 20–40 form a helical membrane-spanning segment; sequence VLLIYTFIFWITGVILLAVGI. Over 41–59 the chain is Extracellular; that stretch reads WGKVSLENYFSLLNEKATN. A helical transmembrane segment spans residues 60–80; the sequence is VPFVLIGTGTVIILLGTFGCF. Residues 81–93 lie on the Cytoplasmic side of the membrane; it reads ATCRASAWMLKLY. A helical transmembrane segment spans residues 94-114; it reads AMFLTLIFLVELVAAIIGFVF. Residues 115-208 are Extracellular-facing; that stretch reads RHEIKNSLKN…IMVMTIIESE (94 aa). Asn-134 is a glycosylation site (N-linked (GlcNAc...) asparagine). A helical membrane pass occupies residues 209-229; the sequence is MGVVAGISFGVACFQLIGIFL. Residues 230-245 lie on the Cytoplasmic side of the membrane; sequence AYCLSRAITNNQYEIV.

It belongs to the tetraspanin (TM4SF) family.

The protein localises to the membrane. The chain is Tetraspanin-6 (TSPAN6) from Bos taurus (Bovine).